The sequence spans 84 residues: UPF0457 protein BT9727_3043 (84 aa).

The protein belongs to the UPF0457 family.

This chain is UPF0457 protein BT9727_3043, found in Bacillus thuringiensis subsp. konkukian (strain 97-27).